Here is a 713-residue protein sequence, read N- to C-terminus: Methionine--tRNA ligase (713 aa).

The 'HIGH' region signature appears at 17–27 (PYANGPIHIGH). Positions 149, 152, 162, and 165 each coordinate Zn(2+). The 'KMSKS' region signature appears at 345–349 (KLSTS). Thr-348 provides a ligand contact to ATP. Residues 530 to 564 (VRTSTPDDDPAGAVGWEDAGAPLLPAGHPIPSGPD) are disordered. In terms of domain architecture, tRNA-binding spans 614-713 (DFTQLDLRAG…TEAEDGSVVR (100 aa)).

The protein belongs to the class-I aminoacyl-tRNA synthetase family. MetG type 1 subfamily. As to quaternary structure, homodimer. Requires Zn(2+) as cofactor.

It localises to the cytoplasm. It carries out the reaction tRNA(Met) + L-methionine + ATP = L-methionyl-tRNA(Met) + AMP + diphosphate. In terms of biological role, is required not only for elongation of protein synthesis but also for the initiation of all mRNA translation through initiator tRNA(fMet) aminoacylation. In Salinibacter ruber (strain DSM 13855 / M31), this protein is Methionine--tRNA ligase.